The chain runs to 644 residues: MSSHDDDHTPLLISDPSVNKPFRSRTPSPEREYCSDCPLQAKGSACNGNSHSLKHETNGASSSNNNVAKSSSHDSFKAKPKNYDSTSNSNEPISFNEPDSSNSHHNNESICNNDNCCREIARRRSLSPLLILPLNFINAFSWGMIEIPLLFLLRQELCAIHYNLDPTQLSPDDPICRLAEITTGVSKVRAAFGSLAAFLGLFSTAYYGTMGDIYGRRLVLFITVSFLLLGDLWLLYQSYAPKHPYFVLFAAALKGLGGYISTVVASQNSFVADCSKTEFRAWYLGLNFAAYHLGTALGPSLSGFIVQYTPHMYYVFYITSTFWIIYLLYVWLILPESLDVSESKEQQNKISGFSSIWRSCLEPLIILWPRSLCTEESCEFHQYDINADTHAGRRHWDVLLAAILISLTLLGAGSMGLLPLYTDYKFGWGPMKASLILSTDSFASSITLVALFPLLSKVIEKIIEKLYSSEGLFEDPSRADNTSSLQGIRNVFSYLVRPGYSRSSILRGRTADEKYTIVKRDVWNAQLGYAIALSAAVLLAVAKSDVALFTAVIIQAISNMVVPCVQSIALNGVQSEYNGRVLAAFAVFEAVALIIRGPIYAFVYTESMKVSYPNMIFFLSAVIYGCCFIIIFFMRLYRPLNRKR.

2 disordered regions span residues 1–35 (MSSH…EYCS) and 48–106 (GNSH…SHHN). Position 28 is a phosphoserine (Ser28). A compositionally biased stretch (low complexity) spans 58–70 (NGASSSNNNVAKS). Over residues 83-106 (YDSTSNSNEPISFNEPDSSNSHHN) the composition is skewed to polar residues. A run of 12 helical transmembrane segments spans residues 131-151 (ILPL…PLLF), 190-210 (AAFG…YGTM), 218-238 (LVLF…LYQS), 245-265 (YFVL…TVVA), 286-306 (LNFA…GFIV), 314-334 (YVFY…WLIL), 398-418 (VLLA…MGLL), 435-455 (LILS…FPLL), 522-542 (VWNA…LAVA), 546-566 (VALF…PCVQ), 583-603 (AAFA…YAFV), and 614-634 (NMIF…IFFM).

It is found in the membrane. This is an uncharacterized protein from Schizosaccharomyces pombe (strain 972 / ATCC 24843) (Fission yeast).